Here is a 201-residue protein sequence, read N- to C-terminus: Probable GTP-binding protein EngB (201 aa).

The region spanning 22–197 is the EngB-type G domain; that stretch reads RLPEYAFIGR…LDYIDSINQE (176 aa). GTP is bound by residues 30 to 37, 57 to 61, 75 to 78, 142 to 145, and 173 to 178; these read GRSNVGKS, GKTQL, DLPG, TKAD, and VFITSS. The Mg(2+) site is built by Ser37 and Thr59.

This sequence belongs to the TRAFAC class TrmE-Era-EngA-EngB-Septin-like GTPase superfamily. EngB GTPase family. Mg(2+) is required as a cofactor.

Its function is as follows. Necessary for normal cell division and for the maintenance of normal septation. The sequence is that of Probable GTP-binding protein EngB from Porphyromonas gingivalis (strain ATCC 33277 / DSM 20709 / CIP 103683 / JCM 12257 / NCTC 11834 / 2561).